The primary structure comprises 174 residues: NADH-ubiquinone oxidoreductase chain 6 (174 aa).

6 helical membrane passes run Met-1–Ser-21, Ser-24–Leu-44, Gly-47–Phe-67, Ala-86–Val-106, Gly-111–Gly-131, and Trp-151–Ala-171.

Belongs to the complex I subunit 6 family. Core subunit of respiratory chain NADH dehydrogenase (Complex I) which is composed of 45 different subunits.

Its subcellular location is the mitochondrion inner membrane. It carries out the reaction a ubiquinone + NADH + 5 H(+)(in) = a ubiquinol + NAD(+) + 4 H(+)(out). Core subunit of the mitochondrial membrane respiratory chain NADH dehydrogenase (Complex I) which catalyzes electron transfer from NADH through the respiratory chain, using ubiquinone as an electron acceptor. Essential for the catalytic activity and assembly of complex I. This is NADH-ubiquinone oxidoreductase chain 6 (MT-ND6) from Pongo pygmaeus (Bornean orangutan).